The sequence spans 148 residues: Lysozyme C (148 aa).

The first 18 residues, 1 to 18 (MKALIILGLVLLSVTVQG), serve as a signal peptide directing secretion. The region spanning 19–148 (KIFERCELAR…VSQYVKGCGV (130 aa)) is the C-type lysozyme domain. 4 disulfide bridges follow: cysteine 24–cysteine 146, cysteine 48–cysteine 134, cysteine 83–cysteine 99, and cysteine 95–cysteine 113. Residues glutamate 53 and aspartate 71 contribute to the active site.

It belongs to the glycosyl hydrolase 22 family. As to quaternary structure, monomer.

The protein resides in the secreted. It catalyses the reaction Hydrolysis of (1-&gt;4)-beta-linkages between N-acetylmuramic acid and N-acetyl-D-glucosamine residues in a peptidoglycan and between N-acetyl-D-glucosamine residues in chitodextrins.. Its function is as follows. Lysozymes have primarily a bacteriolytic function; those in tissues and body fluids are associated with the monocyte-macrophage system and enhance the activity of immunoagents. The protein is Lysozyme C (LYZ) of Pygathrix nemaeus (Red-shanked douc langur).